The sequence spans 198 residues: Na(+)-translocating NADH-quinone reductase subunit E (198 aa).

Transmembrane regions (helical) follow at residues alanine 11 to valine 31, valine 35 to isoleucine 55, phenylalanine 77 to isoleucine 97, glycine 110 to valine 130, isoleucine 140 to isoleucine 160, and leucine 176 to valine 196.

The protein belongs to the NqrDE/RnfAE family. In terms of assembly, composed of six subunits; NqrA, NqrB, NqrC, NqrD, NqrE and NqrF.

The protein resides in the cell inner membrane. The catalysed reaction is a ubiquinone + n Na(+)(in) + NADH + H(+) = a ubiquinol + n Na(+)(out) + NAD(+). NQR complex catalyzes the reduction of ubiquinone-1 to ubiquinol by two successive reactions, coupled with the transport of Na(+) ions from the cytoplasm to the periplasm. NqrA to NqrE are probably involved in the second step, the conversion of ubisemiquinone to ubiquinol. The protein is Na(+)-translocating NADH-quinone reductase subunit E of Klebsiella pneumoniae subsp. pneumoniae (strain ATCC 700721 / MGH 78578).